A 503-amino-acid chain; its full sequence is Long-chain-aldehyde dehydrogenase (503 aa).

Gly218 to Gly224 is a binding site for NAD(+). Residues Glu262 and Cys301 contribute to the active site.

It belongs to the aldehyde dehydrogenase family. In terms of assembly, homotetramer.

The enzyme catalyses a long-chain fatty aldehyde + NAD(+) + H2O = a long-chain fatty acid + NADH + 2 H(+). Completely inhibited by p-chloromercuribenzoate and N-ethylmaleimide. Strongly inhibited by iodoacetate. Inhibited by Pb(2+), Fe(3+), Ag(+) and Hg(2+) and partially inhibited by several other metal ions Mn(2+), Zn(2+) and Cu(2+). Its function is as follows. Aldehyde dehydrogenase that shows activity toward n-alkanals (C(4) to C(14)), with a preference for longer carbon chains. The best substrate is tetradecanal. In Acinetobacter sp, this protein is Long-chain-aldehyde dehydrogenase (ald1).